Reading from the N-terminus, the 485-residue chain is Glutamyl-tRNA(Gln) amidotransferase subunit A (485 aa).

Catalysis depends on charge relay system residues Lys79 and Ser154. Ser178 serves as the catalytic Acyl-ester intermediate.

This sequence belongs to the amidase family. GatA subfamily. As to quaternary structure, heterotrimer of A, B and C subunits.

It carries out the reaction L-glutamyl-tRNA(Gln) + L-glutamine + ATP + H2O = L-glutaminyl-tRNA(Gln) + L-glutamate + ADP + phosphate + H(+). Functionally, allows the formation of correctly charged Gln-tRNA(Gln) through the transamidation of misacylated Glu-tRNA(Gln) in organisms which lack glutaminyl-tRNA synthetase. The reaction takes place in the presence of glutamine and ATP through an activated gamma-phospho-Glu-tRNA(Gln). This Clostridium novyi (strain NT) protein is Glutamyl-tRNA(Gln) amidotransferase subunit A.